The sequence spans 438 residues: ATP synthase subunit alpha, chloroplastic (438 aa).

170-177 (GDRQTGKT) provides a ligand contact to ATP.

The protein belongs to the ATPase alpha/beta chains family. In terms of assembly, F-type ATPases have 2 components, CF(1) - the catalytic core - and CF(0) - the membrane proton channel. CF(1) has five subunits: alpha(3), beta(3), gamma(1), delta(1), epsilon(1). CF(0) has four main subunits: a, b, b' and c.

It is found in the plastid. It localises to the chloroplast thylakoid membrane. It carries out the reaction ATP + H2O + 4 H(+)(in) = ADP + phosphate + 5 H(+)(out). Its function is as follows. Produces ATP from ADP in the presence of a proton gradient across the membrane. The alpha chain is a regulatory subunit. The protein is ATP synthase subunit alpha, chloroplastic of Ochrosphaera neapolitana.